The following is a 394-amino-acid chain: Elongation factor Tu (394 aa).

The tr-type G domain occupies 10–204 (KPHINVGTIG…SLDKYIPIPV (195 aa)). The tract at residues 19–26 (GHVDHGKT) is G1. 19 to 26 (GHVDHGKT) serves as a coordination point for GTP. Threonine 26 is a Mg(2+) binding site. Positions 60–64 (GITIN) are G2. A G3 region spans residues 81–84 (DCPG). GTP-binding positions include 81-85 (DCPGH) and 136-139 (NKCD). The segment at 136-139 (NKCD) is G4. A G5 region spans residues 174 to 176 (SAL).

This sequence belongs to the TRAFAC class translation factor GTPase superfamily. Classic translation factor GTPase family. EF-Tu/EF-1A subfamily. As to quaternary structure, monomer.

The protein resides in the cytoplasm. The enzyme catalyses GTP + H2O = GDP + phosphate + H(+). In terms of biological role, GTP hydrolase that promotes the GTP-dependent binding of aminoacyl-tRNA to the A-site of ribosomes during protein biosynthesis. In Buchnera aphidicola subsp. Cinara cedri (strain Cc), this protein is Elongation factor Tu.